The primary structure comprises 219 residues: Peptide methionine sulfoxide reductase MsrA (219 aa).

Cys-58 is a catalytic residue.

Belongs to the MsrA Met sulfoxide reductase family.

It catalyses the reaction L-methionyl-[protein] + [thioredoxin]-disulfide + H2O = L-methionyl-(S)-S-oxide-[protein] + [thioredoxin]-dithiol. The catalysed reaction is [thioredoxin]-disulfide + L-methionine + H2O = L-methionine (S)-S-oxide + [thioredoxin]-dithiol. Functionally, has an important function as a repair enzyme for proteins that have been inactivated by oxidation. Catalyzes the reversible oxidation-reduction of methionine sulfoxide in proteins to methionine. This Ectopseudomonas mendocina (strain ymp) (Pseudomonas mendocina) protein is Peptide methionine sulfoxide reductase MsrA.